Reading from the N-terminus, the 159-residue chain is Peptide deformylase (159 aa).

The Fe cation site is built by C88 and H130. E131 is an active-site residue. H134 is a binding site for Fe cation.

It belongs to the polypeptide deformylase family. Requires Fe(2+) as cofactor.

The enzyme catalyses N-terminal N-formyl-L-methionyl-[peptide] + H2O = N-terminal L-methionyl-[peptide] + formate. In terms of biological role, removes the formyl group from the N-terminal Met of newly synthesized proteins. Requires at least a dipeptide for an efficient rate of reaction. N-terminal L-methionine is a prerequisite for activity but the enzyme has broad specificity at other positions. This chain is Peptide deformylase, found in Caldanaerobacter subterraneus subsp. tengcongensis (strain DSM 15242 / JCM 11007 / NBRC 100824 / MB4) (Thermoanaerobacter tengcongensis).